The chain runs to 41 residues: MKVLKSLKSAKARHPDCQIVRRRGRLYVICKSNPRFKAVQK.

Belongs to the bacterial ribosomal protein bL36 family.

The sequence is that of Large ribosomal subunit protein bL36 from Vibrio vulnificus (strain YJ016).